A 151-amino-acid chain; its full sequence is Aspartate carbamoyltransferase regulatory chain (151 aa).

Zn(2+)-binding residues include C108, C113, C138, and C141.

Belongs to the PyrI family. As to quaternary structure, contains catalytic and regulatory chains. Zn(2+) is required as a cofactor.

Its function is as follows. Involved in allosteric regulation of aspartate carbamoyltransferase. The chain is Aspartate carbamoyltransferase regulatory chain from Pyrobaculum islandicum (strain DSM 4184 / JCM 9189 / GEO3).